The chain runs to 333 residues: B3 domain-containing protein At1g32030 (333 aa).

Composition is skewed to polar residues over residues 76–99 and 134–143; these read VTVRNPEQNQQNLHRVSTSSSLLD and PQNASSSSTL. The disordered stretch occupies residues 76 to 179; that stretch reads VTVRNPEQNQ…SEPKKAKTPY (104 aa). A DNA-binding region (TF-B3) is located at residues 220–328; it reads QSRLLMPFNT…ILSFALVLPP (109 aa).

It localises to the nucleus. In Arabidopsis thaliana (Mouse-ear cress), this protein is B3 domain-containing protein At1g32030.